The chain runs to 635 residues: Threonine--tRNA ligase (635 aa).

A TGS domain is found at 1–61; the sequence is MIQITLPDSS…SQDSALSIVT (61 aa). The interval 242–533 is catalytic; that stretch reads DHRKLGKELD…LIEEHAGALP (292 aa). Zn(2+) contacts are provided by C333, H384, and H510.

This sequence belongs to the class-II aminoacyl-tRNA synthetase family. As to quaternary structure, homodimer. Zn(2+) is required as a cofactor.

Its subcellular location is the cytoplasm. It catalyses the reaction tRNA(Thr) + L-threonine + ATP = L-threonyl-tRNA(Thr) + AMP + diphosphate + H(+). In terms of biological role, catalyzes the attachment of threonine to tRNA(Thr) in a two-step reaction: L-threonine is first activated by ATP to form Thr-AMP and then transferred to the acceptor end of tRNA(Thr). Also edits incorrectly charged L-seryl-tRNA(Thr). The protein is Threonine--tRNA ligase of Polaromonas naphthalenivorans (strain CJ2).